An 831-amino-acid polypeptide reads, in one-letter code: DNA polymerase I, thermostable (831 aa).

Positions 174 to 258 (RPEQWVDYRA…TDLPLEVDFG (85 aa)) constitute a 5'-3' exonuclease domain. The interval 409-831 (ERLFQTLKER…LGEDWLSAKE (423 aa)) is polymerase.

This sequence belongs to the DNA polymerase type-A family.

The enzyme catalyses DNA(n) + a 2'-deoxyribonucleoside 5'-triphosphate = DNA(n+1) + diphosphate. Functionally, in addition to polymerase activity, this DNA polymerase exhibits 5'-3' exonuclease activity. The polypeptide is DNA polymerase I, thermostable (polA) (Thermus thermophilus).